A 180-amino-acid polypeptide reads, in one-letter code: MPSKEFDTLPNIYLVGPMGAGKTTVGRHLAELLGREFLDSDHEIERRTGATIPWIFEKEGEIGFRSRETIVLDDLTSRRDLVLATGGGVVTQPANRSYLKTRGVVVYLYTPVELQLQRTYRDKNRPLLQVENPEQRLRDLLKLRDPLYRDVAHHIIETNQGAARELAQQILRVILSSGSH.

19 to 24 (GAGKTT) is an ATP binding site. Mg(2+) is bound at residue Thr23. Substrate is bound by residues Asp41, Arg65, and Gly87. Arg125 contacts ATP. Arg144 provides a ligand contact to substrate.

This sequence belongs to the shikimate kinase family. As to quaternary structure, monomer. It depends on Mg(2+) as a cofactor.

The protein localises to the cytoplasm. It catalyses the reaction shikimate + ATP = 3-phosphoshikimate + ADP + H(+). It participates in metabolic intermediate biosynthesis; chorismate biosynthesis; chorismate from D-erythrose 4-phosphate and phosphoenolpyruvate: step 5/7. Functionally, catalyzes the specific phosphorylation of the 3-hydroxyl group of shikimic acid using ATP as a cosubstrate. This is Shikimate kinase from Acinetobacter baylyi (strain ATCC 33305 / BD413 / ADP1).